A 955-amino-acid chain; its full sequence is B3 domain-containing protein Os07g0563300 (955 aa).

2 stretches are compositionally biased toward pro residues: residues 1-20 (MSSP…PPPS) and 29-45 (VQPP…PQQP). Disordered regions lie at residues 1-81 (MSSP…QRPR) and 325-392 (ARKG…SSSL). Positions 62–71 (QHQQQQQGPP) are enriched in low complexity. Residues 332–342 (DPCSSVSTTFK) show a composition bias toward polar residues. Positions 343–355 (LDSHHPSILKDDP) are enriched in basic and acidic residues. Positions 382–392 (QQQQQMASSSL) are enriched in low complexity. Residues 453–554 (FEKMLSASDA…KLVMGFRKAT (102 aa)) constitute a DNA-binding region (TF-B3). Polar residues-rich tracts occupy residues 556–565 (LSAEQDQPTK) and 598–608 (NTESKSSSPVE). The tract at residues 556–642 (LSAEQDQPTK…PLPVKRKATS (87 aa)) is disordered. The segment at 708 to 758 (SGENHQWAQCEDCSKWRKLPVDALLPSKWTCSDNKWDSERSSCDSAQEINM) adopts a CW-type zinc-finger fold. Zn(2+) is bound by residues C717, C720, C738, and C750. Positions 856-955 (MMRREKRQQS…ATRLLRDNPT (100 aa)) are disordered. Residues 862 to 877 (RQQSEKDSGVPRKREP) are compositionally biased toward basic and acidic residues. Composition is skewed to polar residues over residues 878–900 (GQSS…SSPH) and 920–933 (TSSP…LNSQ). Residues 939 to 955 (EQSPKSDATRLLRDNPT) show a composition bias toward basic and acidic residues.

It localises to the nucleus. The protein is B3 domain-containing protein Os07g0563300 of Oryza sativa subsp. japonica (Rice).